The chain runs to 172 residues: Shikimate kinase (172 aa).

Residue 14-19 coordinates ATP; that stretch reads GAGKST. Ser-18 is a Mg(2+) binding site. 3 residues coordinate substrate: Asp-36, Arg-60, and Gly-82. Arg-120 provides a ligand contact to ATP. Arg-139 is a substrate binding site. Residue Gln-156 participates in ATP binding.

The protein belongs to the shikimate kinase family. As to quaternary structure, monomer. Requires Mg(2+) as cofactor.

It localises to the cytoplasm. The catalysed reaction is shikimate + ATP = 3-phosphoshikimate + ADP + H(+). It participates in metabolic intermediate biosynthesis; chorismate biosynthesis; chorismate from D-erythrose 4-phosphate and phosphoenolpyruvate: step 5/7. Its function is as follows. Catalyzes the specific phosphorylation of the 3-hydroxyl group of shikimic acid using ATP as a cosubstrate. In Vibrio vulnificus (strain CMCP6), this protein is Shikimate kinase.